A 290-amino-acid chain; its full sequence is BEL1-like homeodomain protein 11 (290 aa).

The interval 20 to 36 (SRYAKAVQCLVEEVIDI) is SR/KY domain. Positions 81–152 (ENHEIHIKIT…SLEEAIISQL (72 aa)) are BELL domain. The homeobox DNA-binding region spans 202 to 264 (AWKPIRGLPE…NARVRLWKPM (63 aa)).

This sequence belongs to the TALE/BELL homeobox family. May form heterodimeric complexes with TALE/KNOX proteins.

It localises to the nucleus. The chain is BEL1-like homeodomain protein 11 (BLH11) from Arabidopsis thaliana (Mouse-ear cress).